We begin with the raw amino-acid sequence, 228 residues long: Deoxyribose-phosphate aldolase (228 aa).

Catalysis depends on Asp-93, which acts as the Proton donor/acceptor. Lys-159 serves as the catalytic Schiff-base intermediate with acetaldehyde. Residue Lys-188 is the Proton donor/acceptor of the active site.

Belongs to the DeoC/FbaB aldolase family. DeoC type 1 subfamily.

The protein resides in the cytoplasm. It carries out the reaction 2-deoxy-D-ribose 5-phosphate = D-glyceraldehyde 3-phosphate + acetaldehyde. It participates in carbohydrate degradation; 2-deoxy-D-ribose 1-phosphate degradation; D-glyceraldehyde 3-phosphate and acetaldehyde from 2-deoxy-alpha-D-ribose 1-phosphate: step 2/2. In terms of biological role, catalyzes a reversible aldol reaction between acetaldehyde and D-glyceraldehyde 3-phosphate to generate 2-deoxy-D-ribose 5-phosphate. The polypeptide is Deoxyribose-phosphate aldolase (Carboxydothermus hydrogenoformans (strain ATCC BAA-161 / DSM 6008 / Z-2901)).